The following is a 279-amino-acid chain: Sperm acrosome membrane-associated protein 1 (279 aa).

An N-terminal signal peptide occupies residues methionine 1 to glycine 29. Over isoleucine 30–valine 221 the chain is Extracellular. Asparagine 31 is a glycosylation site (N-linked (GlcNAc...) asparagine). Residues serine 39 to glycine 74 are disordered. Positions glycine 46–serine 58 are enriched in acidic residues. The chain crosses the membrane as a helical span at residues leucine 222–threonine 242. Over glutamate 243 to glutamate 279 the chain is Cytoplasmic. Phosphotyrosine is present on tyrosine 253. The segment at tyrosine 253–glutamate 279 is disordered. Serine 262 and serine 275 each carry phosphoserine.

Interacts with CYLC1; the interaction may be relevant for proper acrosome attachment to the nuclear envelope. Post-translationally, N-glycosylated.

The protein localises to the cytoplasmic vesicle. It localises to the secretory vesicle. The protein resides in the acrosome inner membrane. Plays a role in acrosome expansion and establishment of normal sperm morphology during spermatogenesis. Important for male fertility. This Bos taurus (Bovine) protein is Sperm acrosome membrane-associated protein 1 (SPACA1).